Consider the following 574-residue polypeptide: Probable glucomannan 4-beta-mannosyltransferase 6 (574 aa).

Residues 87 to 107 (VVACMVMSVIVLAEKVFLGVV) traverse the membrane as a helical segment. The active site involves Asp180. Substrate-binding residues include Asp239 and Asp241. Residue Asp333 is part of the active site. Helical transmembrane passes span 412-432 (IIST…KVFF), 437-457 (IPLW…SVGT), 523-543 (FHCL…YDYL), and 548-568 (IFYI…FEFM).

The protein belongs to the glycosyltransferase 2 family. Plant cellulose synthase-like A subfamily.

It localises to the golgi apparatus membrane. The catalysed reaction is GDP-mannose + (glucomannan)n = GDP + (glucomannan)n+1.. Probable mannan synthase which consists of a 4-beta-mannosyltransferase activity on mannan using GDP-mannose. The beta-1,4-mannan product is the backbone for galactomannan synthesis by galactomannan galactosyltransferase. Galactomannan is a noncellulosic polysaccharides of plant cell wall. This chain is Probable glucomannan 4-beta-mannosyltransferase 6, found in Oryza sativa subsp. japonica (Rice).